A 162-amino-acid chain; its full sequence is Ribosome-binding factor A (162 aa).

A disordered region spans residues 121-162; the sequence is DEVARVAAGASPAGDPDPYKEPRAEDADDAEVDEPSGSRQAD. Residues 125–136 are compositionally biased toward low complexity; it reads RVAAGASPAGDP.

The protein belongs to the RbfA family. In terms of assembly, monomer. Binds 30S ribosomal subunits, but not 50S ribosomal subunits or 70S ribosomes.

It is found in the cytoplasm. Its function is as follows. One of several proteins that assist in the late maturation steps of the functional core of the 30S ribosomal subunit. Associates with free 30S ribosomal subunits (but not with 30S subunits that are part of 70S ribosomes or polysomes). Required for efficient processing of 16S rRNA. May interact with the 5'-terminal helix region of 16S rRNA. In Rhodococcus jostii (strain RHA1), this protein is Ribosome-binding factor A.